Reading from the N-terminus, the 287-residue chain is Large ribosomal subunit protein uL2 (287 aa).

The tract at residues Arg221–Ser287 is disordered. Over residues Lys258–Ser287 the composition is skewed to basic residues.

Belongs to the universal ribosomal protein uL2 family. In terms of assembly, part of the 50S ribosomal subunit. Forms a bridge to the 30S subunit in the 70S ribosome.

Its function is as follows. One of the primary rRNA binding proteins. Required for association of the 30S and 50S subunits to form the 70S ribosome, for tRNA binding and peptide bond formation. It has been suggested to have peptidyltransferase activity; this is somewhat controversial. Makes several contacts with the 16S rRNA in the 70S ribosome. In Synechococcus sp. (strain CC9311), this protein is Large ribosomal subunit protein uL2.